The primary structure comprises 366 residues: Ribosomal RNA large subunit methyltransferase M (366 aa).

S-adenosyl-L-methionine-binding positions include Ser-188, 221 to 224 (CPGG), Asp-240, Asp-260, and Asp-277. The active-site Proton acceptor is Lys-306.

Belongs to the class I-like SAM-binding methyltransferase superfamily. RNA methyltransferase RlmE family. RlmM subfamily. Monomer.

It localises to the cytoplasm. The catalysed reaction is cytidine(2498) in 23S rRNA + S-adenosyl-L-methionine = 2'-O-methylcytidine(2498) in 23S rRNA + S-adenosyl-L-homocysteine + H(+). Catalyzes the 2'-O-methylation at nucleotide C2498 in 23S rRNA. This chain is Ribosomal RNA large subunit methyltransferase M, found in Escherichia coli O127:H6 (strain E2348/69 / EPEC).